The primary structure comprises 360 residues: Peptide chain release factor 1 (360 aa).

At Gln-235 the chain carries N5-methylglutamine. A compositionally biased stretch (basic and acidic residues) spans 285 to 295; the sequence is RQAAEQADTRR. The segment at 285-309 is disordered; the sequence is RQAAEQADTRRNLLGSGDRSDKIRT.

The protein belongs to the prokaryotic/mitochondrial release factor family. In terms of processing, methylated by PrmC. Methylation increases the termination efficiency of RF1.

Its subcellular location is the cytoplasm. Its function is as follows. Peptide chain release factor 1 directs the termination of translation in response to the peptide chain termination codons UAG and UAA. This is Peptide chain release factor 1 from Actinobacillus pleuropneumoniae serotype 7 (strain AP76).